We begin with the raw amino-acid sequence, 149 residues long: Ribonuclease pancreatic (149 aa).

Residues 1-25 form the signal peptide; sequence MGLEKSFILFPLLILVLGWVQSSLG. Residues Lys-32 and Arg-35 each contribute to the substrate site. His-37 acts as the Proton acceptor in catalysis. 4 disulfide bridges follow: Cys-51/Cys-109, Cys-65/Cys-120, Cys-83/Cys-135, and Cys-90/Cys-97. An N-linked (GlcNAc...) asparagine glycan is attached at Asn-59. 66–70 serves as a coordination point for substrate; sequence KPVNT. N-linked (GlcNAc...) asparagine glycosylation occurs at Asn-87. Residues Lys-91 and Arg-110 each contribute to the substrate site. The active-site Proton donor is the His-144.

Belongs to the pancreatic ribonuclease family. As to quaternary structure, monomer. Interacts with and forms tight 1:1 complexes with RNH1. Dimerization of two such complexes may occur. Interaction with RNH1 inhibits this protein. In terms of tissue distribution, pancreas.

It is found in the secreted. The catalysed reaction is an [RNA] containing cytidine + H2O = an [RNA]-3'-cytidine-3'-phosphate + a 5'-hydroxy-ribonucleotide-3'-[RNA].. It catalyses the reaction an [RNA] containing uridine + H2O = an [RNA]-3'-uridine-3'-phosphate + a 5'-hydroxy-ribonucleotide-3'-[RNA].. Endonuclease that catalyzes the cleavage of RNA on the 3' side of pyrimidine nucleotides. Acts on single-stranded and double-stranded RNA. This chain is Ribonuclease pancreatic (RNASE1), found in Abrothrix jelskii (Jelski's altiplano mouse).